The chain runs to 447 residues: Tubulin beta-1 chain (447 aa).

Positions 11, 69, 138, 142, 143, 144, 204, and 226 each coordinate GTP. Mg(2+) is bound at residue E69. Polar residues predominate over residues 411–427; it reads AESNMNDLVSEYQQYQD. The disordered stretch occupies residues 411–447; it reads AESNMNDLVSEYQQYQDATADEEGDYEDEEEQVPEDE. A compositionally biased stretch (acidic residues) spans 429-447; sequence TADEEGDYEDEEEQVPEDE.

It belongs to the tubulin family. Dimer of alpha and beta chains. A typical microtubule is a hollow water-filled tube with an outer diameter of 25 nm and an inner diameter of 15 nM. Alpha-beta heterodimers associate head-to-tail to form protofilaments running lengthwise along the microtubule wall with the beta-tubulin subunit facing the microtubule plus end conferring a structural polarity. Microtubules usually have 13 protofilaments but different protofilament numbers can be found in some organisms and specialized cells. Mg(2+) is required as a cofactor. In terms of tissue distribution, expressed in leaf sheaths.

The protein localises to the cytoplasm. It localises to the cytoskeleton. Functionally, tubulin is the major constituent of microtubules, a cylinder consisting of laterally associated linear protofilaments composed of alpha- and beta-tubulin heterodimers. Microtubules grow by the addition of GTP-tubulin dimers to the microtubule end, where a stabilizing cap forms. Below the cap, tubulin dimers are in GDP-bound state, owing to GTPase activity of alpha-tubulin. The sequence is that of Tubulin beta-1 chain (TUBB1) from Oryza sativa subsp. japonica (Rice).